The chain runs to 577 residues: Sensor histidine kinase YesM (577 aa).

Residues 1-17 (MKKRVAGWYRRMKIKDK) lie on the Cytoplasmic side of the membrane. The chain crosses the membrane as a helical span at residues 18-38 (LFVFLSLIMAVSFLFVYSGVQ). At 39 to 286 (YAFHVYDEQI…PFDQMFAKIS (248 aa)) the chain is on the extracellular side. A helical transmembrane segment spans residues 287 to 307 (FMKTVIGTCFLLFFCVVLLFG). At 308–577 (RKIANSITEP…ITIPCRNEVV (270 aa)) the chain is on the cytoplasmic side. An HAMP domain is found at 312 to 368 (NSITEPIEQLVTAMKSVQHSGIEAGVSLSLPEHTQDEAGMLNRHFTVMMKRINELME). The Histidine kinase domain maps to 365–574 (ELMEENVEKQ…RIVITIPCRN (210 aa)). H392 carries the post-translational modification Phosphohistidine; by autocatalysis.

It localises to the cell membrane. It catalyses the reaction ATP + protein L-histidine = ADP + protein N-phospho-L-histidine.. Functionally, member of the two-component regulatory system YesM/YesN. Probably activates YesN by phosphorylation. The chain is Sensor histidine kinase YesM (yesM) from Bacillus subtilis (strain 168).